The primary structure comprises 243 residues: Isoprenyl transferase 2 (243 aa).

Residue Asp-23 is part of the active site. Position 23 (Asp-23) interacts with Mg(2+). Substrate-binding positions include 24–27, Trp-28, Arg-36, His-40, and 68–70; these read GNGR and STE. Asn-71 acts as the Proton acceptor in catalysis. Substrate-binding positions include Trp-72, Arg-74, Arg-191, and 197–199; that span reads RTS. Residue Glu-210 coordinates Mg(2+).

Belongs to the UPP synthase family. In terms of assembly, homodimer. Mg(2+) serves as cofactor.

Functionally, catalyzes the condensation of isopentenyl diphosphate (IPP) with allylic pyrophosphates generating different type of terpenoids. The sequence is that of Isoprenyl transferase 2 from Corynebacterium glutamicum (strain ATCC 13032 / DSM 20300 / JCM 1318 / BCRC 11384 / CCUG 27702 / LMG 3730 / NBRC 12168 / NCIMB 10025 / NRRL B-2784 / 534).